Here is a 636-residue protein sequence, read N- to C-terminus: Eukaryotic peptide chain release factor GTP-binding subunit ERF3A (636 aa).

Composition is skewed to gly residues over residues 1 to 16 (MDPS…GGGS) and 103 to 116 (AAGG…GAGG). Disordered regions lie at residues 1–54 (MDPS…AAVA) and 90–206 (LRGP…PPGA). Residues 121–138 (VESSQDQSCEGSNSTVSM) show a composition bias toward polar residues. The segment covering 183–193 (STQEMMEEEEE) has biased composition (acidic residues). The tr-type G domain maps to 209–435 (KEHVNVVFIG…DNLPNFNRSV (227 aa)). The segment at 218–225 (GHVDAGKS) is G1. 221–226 (DAGKST) is a binding site for GTP. The tract at residues 274 to 278 (GKTVE) is G2. Positions 295–298 (DAPG) are G3. Residues 357–360 (NKMD) and 399–401 (SGL) each bind GTP. Residues 357-360 (NKMD) form a G4 region. The tract at residues 399 to 401 (SGL) is G5.

The protein belongs to the TRAFAC class translation factor GTPase superfamily. Classic translation factor GTPase family. ERF3 subfamily. In terms of assembly, component of the eRF1-eRF3-GTP ternary complex, composed of ETF1/ERF1 and ERF3 (GSPT1/ERF3A or GSPT2/ERF3B) and GTP. Component of the transient SURF (SMG1-UPF1-eRF1-eRF3) complex. The ETF1-GSPT1 complex interacts with JMJD4. Interacts with PABPC1. Interacts with SHFL.

The enzyme catalyses GTP + H2O = GDP + phosphate + H(+). GTPase component of the eRF1-eRF3-GTP ternary complex, a ternary complex that mediates translation termination in response to the termination codons UAA, UAG and UGA. GSPT1/ERF3A mediates ETF1/ERF1 delivery to stop codons: The eRF1-eRF3-GTP complex binds to a stop codon in the ribosomal A-site. GTP hydrolysis by GSPT1/ERF3A induces a conformational change that leads to its dissociation, permitting ETF1/ERF1 to accommodate fully in the A-site. Component of the transient SURF complex which recruits UPF1 to stalled ribosomes in the context of nonsense-mediated decay (NMD) of mRNAs containing premature stop codons. Required for SHFL-mediated translation termination which inhibits programmed ribosomal frameshifting (-1PRF) of mRNA from viruses and cellular genes. The sequence is that of Eukaryotic peptide chain release factor GTP-binding subunit ERF3A (Gspt1) from Mus musculus (Mouse).